We begin with the raw amino-acid sequence, 278 residues long: MKKIGFVGAGSMAEAMINGILQSGITKPEHIYITNRSNDERLIELKETYSVRPCRDKNEFFTHTDIIILAFKPKDAAESIDSIRPYIKDQLVISVLAGLTIETIQHYFGRKLAVIRVMPNTSAAIRKSATGFSVSTEASKNDIIAAKALLETIGDATLVEERHLDAVTAIAGSGPAYVYRYIEAMEKAAQKVGLDKETAKALILQTMAGATDMLLQSGKQPEKLRKEITSPGGTTEAGLRALQDSRFEEAIIHCIEETAKRSAEIKEQFAGAALERHS.

This sequence belongs to the pyrroline-5-carboxylate reductase family.

The protein localises to the cytoplasm. It carries out the reaction L-proline + NADP(+) = (S)-1-pyrroline-5-carboxylate + NADPH + 2 H(+). It catalyses the reaction L-proline + NAD(+) = (S)-1-pyrroline-5-carboxylate + NADH + 2 H(+). It participates in amino-acid biosynthesis; L-proline biosynthesis; L-proline from L-glutamate 5-semialdehyde: step 1/1. Catalyzes the reduction of 1-pyrroline-5-carboxylate (PCA) to L-proline. This is Pyrroline-5-carboxylate reductase 2 (proI) from Bacillus subtilis (strain 168).